Here is a 363-residue protein sequence, read N- to C-terminus: Phosphoserine aminotransferase (363 aa).

Arginine 42 is a binding site for L-glutamate. Pyridoxal 5'-phosphate contacts are provided by residues 76–77 (GR), tryptophan 102, threonine 156, aspartate 175, and glutamine 198. Lysine 199 is modified (N6-(pyridoxal phosphate)lysine). 240–241 (NT) is a pyridoxal 5'-phosphate binding site.

This sequence belongs to the class-V pyridoxal-phosphate-dependent aminotransferase family. SerC subfamily. Homodimer. It depends on pyridoxal 5'-phosphate as a cofactor.

It localises to the cytoplasm. The enzyme catalyses O-phospho-L-serine + 2-oxoglutarate = 3-phosphooxypyruvate + L-glutamate. The catalysed reaction is 4-(phosphooxy)-L-threonine + 2-oxoglutarate = (R)-3-hydroxy-2-oxo-4-phosphooxybutanoate + L-glutamate. Its pathway is amino-acid biosynthesis; L-serine biosynthesis; L-serine from 3-phospho-D-glycerate: step 2/3. The protein operates within cofactor biosynthesis; pyridoxine 5'-phosphate biosynthesis; pyridoxine 5'-phosphate from D-erythrose 4-phosphate: step 3/5. In terms of biological role, catalyzes the reversible conversion of 3-phosphohydroxypyruvate to phosphoserine and of 3-hydroxy-2-oxo-4-phosphonooxybutanoate to phosphohydroxythreonine. This is Phosphoserine aminotransferase from Shewanella baltica (strain OS155 / ATCC BAA-1091).